The following is a 62-amino-acid chain: Short neurotoxin A (62 aa).

Over residues 1–16 the composition is skewed to polar residues; that stretch reads RRCFNHPSSQPQTNKS. Positions 1-21 are disordered; sequence RRCFNHPSSQPQTNKSCPPGE. 4 disulfide bridges follow: Cys3–Cys24, Cys17–Cys41, Cys43–Cys54, and Cys55–Cys60.

The protein belongs to the three-finger toxin family. Short-chain subfamily. Type I alpha-neurotoxin sub-subfamily. Expressed by the venom gland.

It is found in the secreted. In terms of biological role, binds to muscle nicotinic acetylcholine receptor (nAChR) and inhibit acetylcholine from binding to the receptor, thereby impairing neuromuscular transmission. In Laticauda crockeri (Crocker's sea snake), this protein is Short neurotoxin A.